A 132-amino-acid polypeptide reads, in one-letter code: Phosphoribosyl-AMP cyclohydrolase (132 aa).

Aspartate 78 serves as a coordination point for Mg(2+). Cysteine 79 contributes to the Zn(2+) binding site. Residues aspartate 80 and aspartate 82 each contribute to the Mg(2+) site. Zn(2+) contacts are provided by cysteine 96 and cysteine 103.

It belongs to the PRA-CH family. In terms of assembly, homodimer. Mg(2+) serves as cofactor. It depends on Zn(2+) as a cofactor.

The protein localises to the cytoplasm. The catalysed reaction is 1-(5-phospho-beta-D-ribosyl)-5'-AMP + H2O = 1-(5-phospho-beta-D-ribosyl)-5-[(5-phospho-beta-D-ribosylamino)methylideneamino]imidazole-4-carboxamide. It functions in the pathway amino-acid biosynthesis; L-histidine biosynthesis; L-histidine from 5-phospho-alpha-D-ribose 1-diphosphate: step 3/9. Functionally, catalyzes the hydrolysis of the adenine ring of phosphoribosyl-AMP. In Nitrosococcus oceani (strain ATCC 19707 / BCRC 17464 / JCM 30415 / NCIMB 11848 / C-107), this protein is Phosphoribosyl-AMP cyclohydrolase.